A 338-amino-acid polypeptide reads, in one-letter code: Ornithine carbamoyltransferase (338 aa).

Carbamoyl phosphate-binding positions include 56–59 (STRT), Arg-107, and 134–137 (HPTQ). Residues Asn-168, Asp-232, and 236 to 237 (SM) each bind L-ornithine. Residues 274–275 (CL) and Arg-320 each bind carbamoyl phosphate.

The protein belongs to the aspartate/ornithine carbamoyltransferase superfamily. OTCase family.

The protein localises to the cytoplasm. The catalysed reaction is carbamoyl phosphate + L-ornithine = L-citrulline + phosphate + H(+). Its pathway is amino-acid biosynthesis; L-arginine biosynthesis; L-arginine from L-ornithine and carbamoyl phosphate: step 1/3. In terms of biological role, reversibly catalyzes the transfer of the carbamoyl group from carbamoyl phosphate (CP) to the N(epsilon) atom of ornithine (ORN) to produce L-citrulline. The protein is Ornithine carbamoyltransferase (argI) of Buchnera aphidicola subsp. Schizaphis graminum (strain Sg).